The sequence spans 759 residues: MNIPSGTFSRSDHFHASSDASLFSSSLPLIQHQNINPRDSYHQSVDEMASGLDHFSGGIGNMLDDGDSHPIGNMLPDDEEELFSGLMDDLNLSSLPATLDDLEDYDLFGSGGGLELETDPYDSLNKGFSRMGFADSNVDNVMPQNIFQNGVGSIAGEHPYGEHPSRTLFVRNINSNVEDSELQALFEQYGHIRTLYTACKQRGFVMVSYNDIRASRAAMRALQGKLLKKRKLDIHFSIPKDNPSEKDVNQGTLVVFNLAPSVSNRDLENIFGVYGEIKEIRETPNKRHHKFVEFFDVRSADAALKALNRTEIAGKRIKLEHSRPGGARRNMMLQMNPELEQDDSYSYLNHVESPLASSPIGNWRNSPIDHPLQSFSKSPIFGNLSPTKNIRYPEFSMKTASVNNDQEGRRFSHLDHLFSSSSYNNASHKASTFQQPQSFGSVSSFGSLNSHPSHVETLSGSEFLWGSPSSSAWPVNPFSSNRENHRFPYSAQNGSLHQLHHIGSAPSGFFPRSPETSSMGSVAFRGASGNMNAQRNLRETSSPNFKMLSAPRRSQLFTGNGSYLWPAATMVSIDDPLEDGSNQQFDSNGNQADIKIQFQLDLSKIMRGEDPRTTLMIKNIPNKYTRNMLLAAIDEKNSGTYDFLYLPIDFKNKCNVGYAFINMVSPKFTIALYEAFNGKKWDKFNSEKVASLAYARIQGKAALIAHFQNSSLMNEDRRCQPIVFDGSESKYPIIRENSQLEASNSTVSHPLVGENTHQS.

2 RRM domains span residues Arg-166 to Pro-239 and Gly-251 to Pro-324.

In terms of biological role, probable RNA-binding protein that plays a role in meiosis and vegetative growth. The chain is Protein MEI2-like 3 (ML3) from Arabidopsis thaliana (Mouse-ear cress).